The sequence spans 187 residues: UPF0301 protein Noc_0368 (187 aa).

It belongs to the UPF0301 (AlgH) family.

This is UPF0301 protein Noc_0368 from Nitrosococcus oceani (strain ATCC 19707 / BCRC 17464 / JCM 30415 / NCIMB 11848 / C-107).